The sequence spans 209 residues: Ribosomal RNA large subunit methyltransferase E (209 aa).

Gly63, Trp65, Asp83, Asp99, and Asp124 together coordinate S-adenosyl-L-methionine. Catalysis depends on Lys164, which acts as the Proton acceptor.

The protein belongs to the class I-like SAM-binding methyltransferase superfamily. RNA methyltransferase RlmE family.

The protein localises to the cytoplasm. The catalysed reaction is uridine(2552) in 23S rRNA + S-adenosyl-L-methionine = 2'-O-methyluridine(2552) in 23S rRNA + S-adenosyl-L-homocysteine + H(+). Its function is as follows. Specifically methylates the uridine in position 2552 of 23S rRNA at the 2'-O position of the ribose in the fully assembled 50S ribosomal subunit. This chain is Ribosomal RNA large subunit methyltransferase E, found in Vibrio atlanticus (strain LGP32) (Vibrio splendidus (strain Mel32)).